The primary structure comprises 497 residues: Lysine--tRNA ligase (497 aa).

2 residues coordinate Mg(2+): Glu406 and Glu413.

This sequence belongs to the class-II aminoacyl-tRNA synthetase family. Homodimer. Mg(2+) is required as a cofactor.

Its subcellular location is the cytoplasm. The enzyme catalyses tRNA(Lys) + L-lysine + ATP = L-lysyl-tRNA(Lys) + AMP + diphosphate. This chain is Lysine--tRNA ligase, found in Rhizobium leguminosarum bv. trifolii (strain WSM2304).